Consider the following 975-residue polypeptide: Exportin-2 (975 aa).

The region spanning 29-105 (AEKLLESTEL…KTLIVTLMLH (77 aa)) is the Importin N-terminal domain.

The protein belongs to the XPO2/CSE1 family. Binds with high affinity to importin-alpha only in the presence of RanGTP.

The protein resides in the cytoplasm. It localises to the nucleus. Functionally, export receptor for importin alpha. Mediates importin-alpha re-export from the nucleus to the cytoplasm after import substrates have been released into the nucleoplasm. The sequence is that of Exportin-2 from Drosophila melanogaster (Fruit fly).